The following is a 164-amino-acid chain: Putative HTH-type transcriptional regulator ORF2 (164 aa).

Positions 2 to 131 (RLTTKGRYAV…SGISLADLVA (130 aa)) constitute an HTH rrf2-type domain.

This is Putative HTH-type transcriptional regulator ORF2 from Azotobacter vinelandii.